The primary structure comprises 583 residues: MRTHFCGELNKDNIGQTVEIYGWVNRRRDHGGVIFLDMRDKHGIAQVVINPDNADFSLAETVRNEFVLKITGTIIARGEGLTNPKLSTGKIEIKAQNIEILNTSKPVPFQIDATDTSEEVRLRYRYLDLRSDTMQNRLRLRSRVTRYMREFMDEHDFLDIETPFLTKATPEGARDYLVPSRTHSGKFFALPQSPQLFKQLLMMSGFERYYQIVKCFRDEDLRADRQPEFTQLDVETSFMSENEIMTMMEKMTRGLFKLVINVDLGDNFPTITYADSMAKYGLDRPDMRISMQIVSIDKIMQGVDFKVFSGPANYDDSRVAALKVPNGASISRKNIDKYTKYVSIYGAKGLAYIKLNKNGPASPILKFLGDEVIAKVIEMTDAKTGDIIFFGADKSKIVNEALGNLREQLAKDLDLFDTQWAPIWVVDFPMFEVGDDGSLNTTHHPFTAPSVDAKTLEKTATTALSKAYDLVINGSEVGGGSIRIHQIDMQKTVLKLLGISDQEIQDKFGFFLNALEYGCPPHGGMAFGLDRLMMIMTGANSIRDVVAFPKTQTAACLLTDTPTSISRKLLRELSVKINLPEKD.

Glu171 contributes to the L-aspartate binding site. The interval 195 to 198 (QLFK) is aspartate. L-aspartate is bound at residue Arg217. ATP is bound by residues 217-219 (RDE) and Gln226. His443 provides a ligand contact to L-aspartate. Glu476 contributes to the ATP binding site. Arg483 contacts L-aspartate. 528 to 531 (GLDR) lines the ATP pocket.

The protein belongs to the class-II aminoacyl-tRNA synthetase family. Type 1 subfamily. In terms of assembly, homodimer.

Its subcellular location is the cytoplasm. The enzyme catalyses tRNA(Asx) + L-aspartate + ATP = L-aspartyl-tRNA(Asx) + AMP + diphosphate. Functionally, aspartyl-tRNA synthetase with relaxed tRNA specificity since it is able to aspartylate not only its cognate tRNA(Asp) but also tRNA(Asn). Reaction proceeds in two steps: L-aspartate is first activated by ATP to form Asp-AMP and then transferred to the acceptor end of tRNA(Asp/Asn). In Ruthia magnifica subsp. Calyptogena magnifica, this protein is Aspartate--tRNA(Asp/Asn) ligase.